Reading from the N-terminus, the 369-residue chain is Protein-glutamate methylesterase/protein-glutamine glutaminase of group 3 operon (369 aa).

In terms of domain architecture, Response regulatory spans 11–128; it reads RVLIVDDSAA…DLERQEASIR (118 aa). The residue at position 62 (D62) is a 4-aspartylphosphate. The tract at residues 136–168 is disordered; that stretch reads ATETTRRRSQPEPRPLAPGPKLTADEILPARPP. Residues 170–358 form the CheB-type methylesterase domain; it reads PVPETMPVVC…LDRLAARIME (189 aa). Residues S183, H209, and D305 contribute to the active site.

Belongs to the CheB family. In terms of processing, phosphorylated in vitro by CheA2, but not by CheA1. Phosphorylation of the N-terminal regulatory domain activates the methylesterase activity.

The protein resides in the cytoplasm. It carries out the reaction [protein]-L-glutamate 5-O-methyl ester + H2O = L-glutamyl-[protein] + methanol + H(+). The catalysed reaction is L-glutaminyl-[protein] + H2O = L-glutamyl-[protein] + NH4(+). Functionally, involved in chemotaxis. Part of a chemotaxis signal transduction system that modulates chemotaxis in response to various stimuli. Catalyzes the demethylation of specific methylglutamate residues introduced into the chemoreceptors (methyl-accepting chemotaxis proteins or MCP) by CheR. Also mediates the irreversible deamidation of specific glutamine residues to glutamic acid. The sequence is that of Protein-glutamate methylesterase/protein-glutamine glutaminase of group 3 operon (cheB3) from Cereibacter sphaeroides (Rhodobacter sphaeroides).